We begin with the raw amino-acid sequence, 212 residues long: RNA chaperone ProQ (212 aa).

2 stretches are compositionally biased toward basic and acidic residues: residues 102–124 and 132–144; these read ALKESKERVFASRRTNTKEEKAK and RKADAAAKSDKPK. The tract at residues 102–149 is disordered; it reads ALKESKERVFASRRTNTKEEKAKQPRRPAPRKADAAAKSDKPKAAPKA.

This sequence belongs to the ProQ family.

Its subcellular location is the cytoplasm. Functionally, RNA chaperone with significant RNA binding, RNA strand exchange and RNA duplexing activities. The polypeptide is RNA chaperone ProQ (Aeromonas hydrophila subsp. hydrophila (strain ATCC 7966 / DSM 30187 / BCRC 13018 / CCUG 14551 / JCM 1027 / KCTC 2358 / NCIMB 9240 / NCTC 8049)).